The primary structure comprises 356 residues: Septin-2A (356 aa).

Residues 33–305 enclose the Septin-type G domain; the sequence is KGFEFTLMVV…ENFRSERLKK (273 aa). A G1 motif region spans residues 43–50; that stretch reads GESGLGKS. GTP contacts are provided by residues 43–50, T77, G103, 182–190, G240, and R255; these read GESGLGKS and KADTLTLRE. The G3 motif stretch occupies residues 100–103; the sequence is DTPG. The tract at residues 181–184 is G4 motif; it reads AKAD. The tract at residues 259–269 is important for dimerization; the sequence is WGVVEVENTEH.

Belongs to the TRAFAC class TrmE-Era-EngA-EngB-Septin-like GTPase superfamily. Septin GTPase family. As to quaternary structure, septins polymerize into heterooligomeric protein complexes that form filaments, and associate with cellular membranes, actin filaments and microtubules. GTPase activity is required for filament formation. Can form heterooligomers with other family members and form filaments. Interacts with wdpcp.

It is found in the cytoplasm. The protein localises to the cytoskeleton. Its subcellular location is the spindle. It localises to the cleavage furrow. The protein resides in the midbody. It is found in the cell projection. The protein localises to the cilium membrane. Its function is as follows. Filament-forming cytoskeletal GTPase. Required for normal organization of the actin cytoskeleton. Plays a role in the biogenesis of polarized columnar-shaped epithelium. Required for the progression through mitosis through regulation of chromosome congression. During anaphase, may be required for chromosome segregation and spindle elongation. Probably plays a role in ciliogenesis and collective cell movements including convergent extension during gastrulation. In cilia, required for the integrity of the diffusion barrier at the base of the primary cilium that prevents diffusion of transmembrane proteins between the cilia and plasma membranes. Controls cell shape and not polarization of cells during convergent extension. This chain is Septin-2A (sept2-a), found in Xenopus laevis (African clawed frog).